Consider the following 274-residue polypeptide: Outer surface protein A (274 aa).

Residues 1–16 (MKKYLLGIGLILALIA) form the signal peptide. The N-palmitoyl cysteine moiety is linked to residue C17. Residue C17 is the site of S-diacylglycerol cysteine attachment.

The protein belongs to the OspA lipoprotein family.

It is found in the cell outer membrane. The protein localises to the cell surface. The protein is Outer surface protein A of Borreliella burgdorferi (Lyme disease spirochete).